A 120-amino-acid polypeptide reads, in one-letter code: C-C motif chemokine 27 (120 aa).

The first 25 residues, 1-25, serve as a signal peptide directing secretion; the sequence is MMEGLSPASSLPLLLLLLSPAPEAA. 2 disulfides stabilise this stretch: Cys34/Cys63 and Cys35/Cys78.

The protein belongs to the intercrine beta (chemokine CC) family. As to quaternary structure, monomer, dimer, and tetramer. Heparin avidly promotes oligomerization. Interacts with TNFAIP6 (via Link domain). As to expression, isoform 1 is predominantly expressed in placenta and weakly in skin. Isoform 2 is predominantly expressed in testes and brain, weakly in kidney and liver and even lower in heart and muscle. Low expression of both isoforms in other tissues.

It is found in the secreted. The protein resides in the nucleus. Chemotactic factor that attracts skin-associated memory T-lymphocytes. May play a role in mediating homing of lymphocytes to cutaneous sites. May play a role in cell migration during embryogenesis. Nuclear forms may facilitate cellular migration by inducing cytoskeletal relaxation. Binds to CCR10. This is C-C motif chemokine 27 (Ccl27) from Mus musculus (Mouse).